Reading from the N-terminus, the 324-residue chain is Lipoyl synthase (324 aa).

Residues Cys71, Cys76, Cys82, Cys97, Cys101, Cys104, and Ser311 each contribute to the [4Fe-4S] cluster site. The Radical SAM core domain maps to 83-300 (FGHGTATFLI…GDKAREMGFT (218 aa)).

This sequence belongs to the radical SAM superfamily. Lipoyl synthase family. [4Fe-4S] cluster is required as a cofactor.

It localises to the cytoplasm. It catalyses the reaction [[Fe-S] cluster scaffold protein carrying a second [4Fe-4S](2+) cluster] + N(6)-octanoyl-L-lysyl-[protein] + 2 oxidized [2Fe-2S]-[ferredoxin] + 2 S-adenosyl-L-methionine + 4 H(+) = [[Fe-S] cluster scaffold protein] + N(6)-[(R)-dihydrolipoyl]-L-lysyl-[protein] + 4 Fe(3+) + 2 hydrogen sulfide + 2 5'-deoxyadenosine + 2 L-methionine + 2 reduced [2Fe-2S]-[ferredoxin]. Its pathway is protein modification; protein lipoylation via endogenous pathway; protein N(6)-(lipoyl)lysine from octanoyl-[acyl-carrier-protein]: step 2/2. In terms of biological role, catalyzes the radical-mediated insertion of two sulfur atoms into the C-6 and C-8 positions of the octanoyl moiety bound to the lipoyl domains of lipoate-dependent enzymes, thereby converting the octanoylated domains into lipoylated derivatives. The sequence is that of Lipoyl synthase from Nitrosococcus oceani (strain ATCC 19707 / BCRC 17464 / JCM 30415 / NCIMB 11848 / C-107).